We begin with the raw amino-acid sequence, 231 residues long: Two-component response regulator ORR1 (231 aa).

The Response regulatory domain occupies 9–135; it reads RVLLVDDSPV…DVQRLRKCSP (127 aa). The residue at position 68 (D68) is a 4-aspartylphosphate.

The protein belongs to the ARR family. Type-A subfamily. Post-translationally, two-component system major event consists of a His-to-Asp phosphorelay between a sensor histidine kinase (HK) and a response regulator (RR). In plants, the His-to-Asp phosphorelay involves an additional intermediate named Histidine-containing phosphotransfer protein (HPt). This multistep phosphorelay consists of a His-Asp-His-Asp sequential transfer of a phosphate group between first a His and an Asp of the HK protein, followed by the transfer to a conserved His of the HPt protein and finally the transfer to an Asp in the receiver domain of the RR protein. Expressed in mature leaves and flowers, and at low levels in roots and shoots.

Functionally, functions as a response regulator involved in His-to-Asp phosphorelay signal transduction system. Phosphorylation of the Asp residue in the receiver domain activates the ability of the protein to promote the transcription of target genes. Type-A response regulators seem to act as negative regulators of the cytokinin signaling. The sequence is that of Two-component response regulator ORR1 from Oryza sativa subsp. indica (Rice).